The following is a 310-amino-acid chain: Olfactory receptor 5P80 (310 aa).

Residues 1–25 (MEPGNYTVVTEVILLGFTEDAIIRA) are Extracellular-facing. Asn-5 carries N-linked (GlcNAc...) asparagine glycosylation. Residues 26–46 (ILFIVFLIIYSVTLMGNASII) form a helical membrane-spanning segment. Residues 47–54 (MLIRRSPQ) lie on the Cytoplasmic side of the membrane. Residues 55–75 (LHTPMYLLLSHLAFVDIGYSS) form a helical membrane-spanning segment. Residues 76–99 (SVTPIMLKGFLRKETFILVSGCVA) lie on the Extracellular side of the membrane. Cysteines 97 and 189 form a disulfide. Residues 100–120 (QLCSVVTFGSTECFLLAAMAY) form a helical membrane-spanning segment. Residues 121 to 133 (DRYVAICSPLLYA) lie on the Cytoplasmic side of the membrane. A helical transmembrane segment spans residues 134-154 (TQMSSTVCILLVGASYLGGCV). The Extracellular segment spans residues 155-196 (NAWTFTGCLLNLSFCRPNKVNHFFCDYSPLLKISCSHDFSSE). N-linked (GlcNAc...) asparagine glycosylation occurs at Asn-165. Residues 197 to 217 (VIPAISSGSIIVVTVFIIALS) form a helical membrane-spanning segment. Residues 218 to 237 (YVYILVSILKMRSTEGRQKA) lie on the Cytoplasmic side of the membrane. A helical membrane pass occupies residues 238 to 258 (FSTCTSHLTAVTLFYGTITFI). At 259-271 (YVMPKSSYSTDQN) the chain is on the extracellular side. The helical transmembrane segment at 272-292 (KVVSVFYTVVIPMLNPIIYSL) threads the bilayer. Residues 293–310 (RNKDVKEAMKKLMANTHH) are Cytoplasmic-facing.

It belongs to the G-protein coupled receptor 1 family.

The protein resides in the cell membrane. Its function is as follows. Potential odorant receptor. The sequence is that of Olfactory receptor 5P80 from Mus musculus (Mouse).